A 553-amino-acid polypeptide reads, in one-letter code: Glutamine--tRNA ligase (553 aa).

Positions 34–44 match the 'HIGH' region motif; sequence PEPNGYLHIGH. Residues 35 to 37 and 41 to 47 contribute to the ATP site; these read EPN and HIGHAKS. L-glutamine contacts are provided by D68 and Y213. ATP-binding positions include T232 and 262–263; that span reads RL. A 'KMSKS' region motif is present at residues 269–273; sequence LTSKR.

This sequence belongs to the class-I aminoacyl-tRNA synthetase family. In terms of assembly, monomer.

It localises to the cytoplasm. The catalysed reaction is tRNA(Gln) + L-glutamine + ATP = L-glutaminyl-tRNA(Gln) + AMP + diphosphate. The protein is Glutamine--tRNA ligase of Psychromonas ingrahamii (strain DSM 17664 / CCUG 51855 / 37).